Reading from the N-terminus, the 388-residue chain is 1-deoxy-D-xylulose 5-phosphate reductoisomerase (388 aa).

7 residues coordinate NADPH: Thr-13, Gly-14, Ser-15, Ile-16, Arg-40, Asn-41, and Asn-124. Position 125 (Lys-125) interacts with 1-deoxy-D-xylulose 5-phosphate. Glu-126 provides a ligand contact to NADPH. Asp-150 serves as a coordination point for Mn(2+). Residues Ser-151, Glu-152, Ser-176, and His-199 each contribute to the 1-deoxy-D-xylulose 5-phosphate site. A Mn(2+)-binding site is contributed by Glu-152. Gly-205 is a binding site for NADPH. Ser-212, Asn-217, Lys-218, and Glu-221 together coordinate 1-deoxy-D-xylulose 5-phosphate. Residue Glu-221 participates in Mn(2+) binding.

The protein belongs to the DXR family. Homodimer. The cofactor is Mg(2+). Mn(2+) is required as a cofactor. Requires Co(2+) as cofactor.

The enzyme catalyses 2-C-methyl-D-erythritol 4-phosphate + NADP(+) = 1-deoxy-D-xylulose 5-phosphate + NADPH + H(+). The protein operates within isoprenoid biosynthesis; isopentenyl diphosphate biosynthesis via DXP pathway; isopentenyl diphosphate from 1-deoxy-D-xylulose 5-phosphate: step 1/6. Its activity is regulated as follows. Competitively inhibited by the antibiotic fosmidomycin. Catalyzes the NADPH-dependent rearrangement and reduction of 1-deoxy-D-xylulose-5-phosphate (DXP) to 2-C-methyl-D-erythritol 4-phosphate (MEP). Cannot use NADH instead of NADPH as the reducing agent. This is 1-deoxy-D-xylulose 5-phosphate reductoisomerase from Zymomonas mobilis subsp. mobilis (strain ATCC 31821 / ZM4 / CP4).